A 353-amino-acid polypeptide reads, in one-letter code: L-tryptophan dehydrogenase (353 aa).

R44 is a binding site for NAD(+). The Proton donor/acceptor role is filled by K80. Residues D114, T146, 176 to 181, K204, and 255 to 257 contribute to the NAD(+) site; these read GLGNVG and AAN.

Belongs to the Glu/Leu/Phe/Val dehydrogenases family. As to quaternary structure, homodimer.

It catalyses the reaction L-tryptophan + NAD(+) + H2O = indole-3-pyruvate + NH4(+) + NADH + H(+). Functionally, catalyzes the reversible oxidative deamination of L-tryptophan to indole-3-pyruvate in the presence of NAD(+). Cannot use other L-amino acids and D-Trp. Involved in the biosynthesis of scytonemin, a cyanobacterial radiation-absorbing pigment. The chain is L-tryptophan dehydrogenase from Nostoc punctiforme (strain ATCC 29133 / PCC 73102).